We begin with the raw amino-acid sequence, 421 residues long: 3-isopropylmalate dehydratase large subunit (421 aa).

Residues cysteine 292, cysteine 352, and cysteine 355 each contribute to the [4Fe-4S] cluster site.

This sequence belongs to the aconitase/IPM isomerase family. LeuC type 2 subfamily. Heterodimer of LeuC and LeuD. [4Fe-4S] cluster is required as a cofactor.

It catalyses the reaction (2R,3S)-3-isopropylmalate = (2S)-2-isopropylmalate. The protein operates within amino-acid biosynthesis; L-leucine biosynthesis; L-leucine from 3-methyl-2-oxobutanoate: step 2/4. In terms of biological role, catalyzes the isomerization between 2-isopropylmalate and 3-isopropylmalate, via the formation of 2-isopropylmaleate. This chain is 3-isopropylmalate dehydratase large subunit, found in Herpetosiphon aurantiacus (strain ATCC 23779 / DSM 785 / 114-95).